The primary structure comprises 274 residues: 4-hydroxy-3-methylbut-2-enyl diphosphate reductase (274 aa).

A [4Fe-4S] cluster-binding site is contributed by cysteine 12. (2E)-4-hydroxy-3-methylbut-2-enyl diphosphate contacts are provided by histidine 36 and histidine 70. 2 residues coordinate dimethylallyl diphosphate: histidine 36 and histidine 70. Residues histidine 36 and histidine 70 each contribute to the isopentenyl diphosphate site. Position 92 (cysteine 92) interacts with [4Fe-4S] cluster. Histidine 120 lines the (2E)-4-hydroxy-3-methylbut-2-enyl diphosphate pocket. Position 120 (histidine 120) interacts with dimethylallyl diphosphate. Residue histidine 120 coordinates isopentenyl diphosphate. The Proton donor role is filled by glutamate 122. Threonine 158 contributes to the (2E)-4-hydroxy-3-methylbut-2-enyl diphosphate binding site. Residue cysteine 186 participates in [4Fe-4S] cluster binding. Positions 214, 215, 216, and 258 each coordinate (2E)-4-hydroxy-3-methylbut-2-enyl diphosphate. The dimethylallyl diphosphate site is built by serine 214, serine 215, asparagine 216, and serine 258. Isopentenyl diphosphate is bound by residues serine 214, serine 215, asparagine 216, and serine 258.

It belongs to the IspH family. [4Fe-4S] cluster serves as cofactor.

The catalysed reaction is isopentenyl diphosphate + 2 oxidized [2Fe-2S]-[ferredoxin] + H2O = (2E)-4-hydroxy-3-methylbut-2-enyl diphosphate + 2 reduced [2Fe-2S]-[ferredoxin] + 2 H(+). The enzyme catalyses dimethylallyl diphosphate + 2 oxidized [2Fe-2S]-[ferredoxin] + H2O = (2E)-4-hydroxy-3-methylbut-2-enyl diphosphate + 2 reduced [2Fe-2S]-[ferredoxin] + 2 H(+). The protein operates within isoprenoid biosynthesis; dimethylallyl diphosphate biosynthesis; dimethylallyl diphosphate from (2E)-4-hydroxy-3-methylbutenyl diphosphate: step 1/1. It functions in the pathway isoprenoid biosynthesis; isopentenyl diphosphate biosynthesis via DXP pathway; isopentenyl diphosphate from 1-deoxy-D-xylulose 5-phosphate: step 6/6. Functionally, catalyzes the conversion of 1-hydroxy-2-methyl-2-(E)-butenyl 4-diphosphate (HMBPP) into a mixture of isopentenyl diphosphate (IPP) and dimethylallyl diphosphate (DMAPP). Acts in the terminal step of the DOXP/MEP pathway for isoprenoid precursor biosynthesis. In Helicobacter pylori (strain Shi470), this protein is 4-hydroxy-3-methylbut-2-enyl diphosphate reductase.